Consider the following 146-residue polypeptide: Large ribosomal subunit protein uL15 (146 aa).

Residues 1–65 (MSDIQLNTLK…GQMPLQRRLP (65 aa)) are disordered. Positions 24–34 (RGIGSGLGKTA) are enriched in gly residues.

This sequence belongs to the universal ribosomal protein uL15 family. As to quaternary structure, part of the 50S ribosomal subunit.

Its function is as follows. Binds to the 23S rRNA. The chain is Large ribosomal subunit protein uL15 from Bordetella petrii (strain ATCC BAA-461 / DSM 12804 / CCUG 43448).